A 502-amino-acid polypeptide reads, in one-letter code: MSYFPWLTILVVLPIFAGSLIFFLPHRGNKIVRWYTISICLLEFLLMTYAFCYHFQLEDPLIQLKEDYKWIDIFDFHWRLGIDGLSLGSILLTGFITTLATLAAWPVTRNSRLFYFLMLAMYSGQIGLFSSRDLLLFFIMWELELIPVYLLLSMWGGKRRLYSATKFILYTAGGSIFFLIGVLGMGLYGYGSNELGLDLERLINQSYPATLEILLYFGFLIAYAVKLPIIPLHTWLPDTHGEAHYSTCMLLAGILLKMGAYGLIRINMELLPHAHYLFSPWLVIIGAIQIIYAASTSLGQRNFKKRIAYSSISHMGFIIIGIGSITNIGLNGAILQILSHGFIGATLFFLAGTASDRMRLVYLEELGGISIPMPKIFTMFSSFSMASLALPGMSGFVAELVVFFGLITSPKFLLMPKMLITFVMAIGMILTPIYLLSMLRQMFYGYKLFNVPNANFVDSGPRELFILICIFLPVIGIGIYPDFVLSLSIDRVEALVSNYYPK.

Transmembrane regions (helical) follow at residues F4–L24, I37–L57, L87–V107, L113–S130, L134–M154, F167–L187, I213–H233, H244–I264, A274–A294, M315–L335, Q336–D356, L388–T408, L419–L439, and L464–V484.

Belongs to the complex I subunit 4 family.

The protein localises to the plastid. The protein resides in the chloroplast thylakoid membrane. It catalyses the reaction a plastoquinone + NADH + (n+1) H(+)(in) = a plastoquinol + NAD(+) + n H(+)(out). It carries out the reaction a plastoquinone + NADPH + (n+1) H(+)(in) = a plastoquinol + NADP(+) + n H(+)(out). The sequence is that of NAD(P)H-quinone oxidoreductase chain 4, chloroplastic from Lolium perenne (Perennial ryegrass).